Here is a 193-residue protein sequence, read N- to C-terminus: Inner membrane-spanning protein YciB (193 aa).

Transmembrane regions (helical) follow at residues 5–25 (TLDA…FYIY), 36–56 (IIAA…LMFV), 67–87 (WLVV…QDDF), 93–113 (APII…FLGG), 138–158 (VWVG…FVWV), and 164–184 (FTAF…FWFL).

The protein belongs to the YciB family.

Its subcellular location is the cell inner membrane. Plays a role in cell envelope biogenesis, maintenance of cell envelope integrity and membrane homeostasis. The polypeptide is Inner membrane-spanning protein YciB (Vitreoscilla sp. (strain C1)).